Consider the following 202-residue polypeptide: Na(+)-translocating NADH-quinone reductase subunit E (202 aa).

The next 6 helical transmembrane spans lie at 11 to 31 (AVFV…FIAI), 35 to 55 (VETA…TVPA), 81 to 101 (FLGL…LEML), 114 to 134 (GVFL…LFMV), 144 to 164 (TVYG…LAGI), and 180 to 200 (LGIT…FSGV).

Belongs to the NqrDE/RnfAE family. As to quaternary structure, composed of six subunits; NqrA, NqrB, NqrC, NqrD, NqrE and NqrF.

Its subcellular location is the cell inner membrane. It carries out the reaction a ubiquinone + n Na(+)(in) + NADH + H(+) = a ubiquinol + n Na(+)(out) + NAD(+). Functionally, NQR complex catalyzes the reduction of ubiquinone-1 to ubiquinol by two successive reactions, coupled with the transport of Na(+) ions from the cytoplasm to the periplasm. NqrA to NqrE are probably involved in the second step, the conversion of ubisemiquinone to ubiquinol. This chain is Na(+)-translocating NADH-quinone reductase subunit E, found in Pseudomonas aeruginosa (strain LESB58).